A 183-amino-acid polypeptide reads, in one-letter code: Apo-citrate lyase phosphoribosyl-dephospho-CoA transferase (183 aa).

This sequence belongs to the CitX family.

The catalysed reaction is apo-[citrate lyase ACP] + 2'-(5''-triphospho-alpha-D-ribosyl)-3'-dephospho-CoA = holo-[citrate lyase ACP] + diphosphate. Its function is as follows. Transfers 2-(5''-triphosphoribosyl)-3'-dephosphocoenzyme-A on a serine residue to the apo-acyl carrier protein (gamma chain) of the citrate lyase to yield holo-acyl carrier protein. This chain is Apo-citrate lyase phosphoribosyl-dephospho-CoA transferase, found in Escherichia coli O6:K15:H31 (strain 536 / UPEC).